The following is a 100-amino-acid chain: Putative protein BCL8 (100 aa).

Expressed in prostate and testis.

The protein is Putative protein BCL8 (NBEAP1) of Homo sapiens (Human).